The chain runs to 96 residues: Putative regulatory protein Teth514_1762 (96 aa).

The protein belongs to the RemA family.

The chain is Putative regulatory protein Teth514_1762 from Thermoanaerobacter sp. (strain X514).